Reading from the N-terminus, the 344-residue chain is rRNA 2'-O-methyltransferase fibrillarin (344 aa).

Residues 1-113 (MGKPGFSPRG…GFKGGKTVTI (113 aa)) form a disordered region. The span at 8 to 107 (PRGGGGGGGG…RGGGAGGFKG (100 aa)) shows a compositional bias: gly residues. An asymmetric dimethylarginine mark is found at R9, R23, R25, R40, R42, R48, R51, R58, R63, R71, R77, R83, R88, R93, and R98. S-adenosyl-L-methionine contacts are provided by residues 197 to 198 (TT), 216 to 217 (EF), 241 to 242 (DA), and 261 to 264 (DVAQ).

Belongs to the methyltransferase superfamily. Fibrillarin family. In terms of assembly, component of box C/D small nucleolar ribonucleoprotein (snoRNP) particles. It is associated with the U3, U8 and U13 small nuclear RNAs. In terms of processing, by homology to other fibrillarins, some or all of the N-terminal domain arginines are modified to asymmetric dimethylarginine (DMA).

The protein resides in the nucleus. Its subcellular location is the nucleolus. The catalysed reaction is L-glutaminyl-[histone H2A] + S-adenosyl-L-methionine = N(5)-methyl-L-glutaminyl-[histone H2A] + S-adenosyl-L-homocysteine + H(+). Functionally, S-adenosyl-L-methionine-dependent methyltransferase that has the ability to methylate both RNAs and proteins. Involved in pre-rRNA processing. Utilizes the methyl donor S-adenosyl-L-methionine to catalyze the site-specific 2'-hydroxyl methylation of ribose moieties in pre-ribosomal RNA. Site specificity is provided by a guide RNA that base pairs with the substrate. Methylation occurs at a characteristic distance from the sequence involved in base pairing with the guide RNA. Also acts as a protein methyltransferase by mediating methylation of 'Gln-105' of histone H2A (H2AQ105me), a modification that impairs binding of the FACT complex and is specifically present at 35S ribosomal DNA locus. The polypeptide is rRNA 2'-O-methyltransferase fibrillarin (Drosophila melanogaster (Fruit fly)).